A 686-amino-acid polypeptide reads, in one-letter code: Probable metal-nicotianamine transporter YSL10 (686 aa).

Transmembrane regions (helical) follow at residues 36–56, 60–80, 109–129, 151–171, 212–232, 271–291, 316–336, 383–403, 415–435, 461–481, 501–521, 556–576, 597–617, and 639–659; these read VTLR…VIVM, LTTG…FFLL, CVVA…IFAM, LGWM…SVVP, MLGK…FYTG, LVNI…WPLI, VFIS…KVMT, IPNW…IATV, VAVS…GCGL, GGII…STAS, FVSQ…VFWL, GSLP…AIAV, MAIP…GSLI, and GLIC…LAGV.

Belongs to the YSL (TC 2.A.67.2) family.

Its subcellular location is the membrane. In terms of biological role, may be involved in the transport of nicotianamine-chelated metals. The chain is Probable metal-nicotianamine transporter YSL10 (YSL10) from Oryza sativa subsp. japonica (Rice).